Consider the following 867-residue polypeptide: Cilium assembly protein DZIP1 (867 aa).

A mediates interaction with PCM1 region spans residues 12 to 203 (MPFQKHVYYP…KANYYQCHFC (192 aa)). The interval 12-367 (MPFQKHVYYP…QDFHNVMQLL (356 aa)) is mediates interaction with GLI3 and localization to the cilium basal body. A required for interaction with DAZ1 region spans residues 154-278 (CDGEQSKKLL…SKEYEMQKTK (125 aa)). The segment at 198 to 221 (YQCHFCDKAFMNQAFLQSHIQRRH) adopts a C2H2-type zinc-finger fold. S226 is modified (phosphoserine; by PLK1). Coiled-coil stretches lie at residues 230–340 (YQKN…KSNI), 401–445 (TSMI…FTCN), and 568–588 (DQLH…EREI). Residues 446–617 (PLNSISEPKG…EKALLSSDQC (172 aa)) are mediates interaction with GDI2 and RAB8A. Polar residues-rich tracts occupy residues 643 to 654 (LIRQKAVSTDRT), 671 to 680 (KSSTITTPPF), and 708 to 718 (NKGSFGKNTVK). Disordered stretches follow at residues 643–768 (LIRQ…GGTN) and 796–867 (SLEE…TSDV). Residues 722-733 (DGTEGSEIEDTD) show a composition bias toward acidic residues. Basic and acidic residues predominate over residues 807 to 823 (SGKEQKEPPPAKNEPHF). Over residues 848-859 (SSTLKSSLVTVT) the composition is skewed to low complexity.

Belongs to the DZIP C2H2-type zinc-finger protein family. Interacts with DAZ1. Interacts with the BBSome; recruits the BBSome to centriolar satellites of the cilium. Interacts with PCM1; localizes DZIP1 and the associated BBSome to centriolar satellites. Interacts with RAB8A (GDP-bound inactive form); recruits RAB8A to the basal body of the cilium and prevents its inhibition by GDI2. Interacts with GDI2; negatively regulates the interaction of GDI2 with GDP-bound RAB8A. Interacts with GLI3; retains GLI3 within the cytoplasm. Interacts with CEP164. Interacts with IFT88. In terms of processing, phosphorylation at Ser-226 by PLK1 before mitosis prevents interaction with PCM1 and localization to centriolar satellites. Thereby, it negatively regulates the localization of the BBSome to centriolar satellites. As to expression, predominantly expressed in testis (at protein level). Also expressed in fetal brain, adult oocytes and ovary. Expressed in undifferentiated ES cells. In testis, it is specifically expressed in germ cells (at protein level). Expressed in mature germ cells and secondary spermatocytes, while it is weakly or not expressed in primary spermatocytes.

It is found in the cytoplasm. It localises to the cytoskeleton. The protein localises to the cilium basal body. Its subcellular location is the microtubule organizing center. The protein resides in the centrosome. It is found in the centriolar satellite. It localises to the centriole. The protein localises to the nucleus. Its subcellular location is the nucleus speckle. Molecular adapter that recruits protein complexes required for cilium assembly and function to the cilium basal body. At the exit of mitosis, localizes to the basal body and ciliary base of the forming primary cilium where it recruits and activates RAB8A to direct vesicle-mediated transport of proteins to the cilium. Also recruits the BBSome, a complex involved in cilium biogenesis, by bridging it to PCM1 at the centriolar satellites of the cilium. It is also required for the recruitment to the cilium basal body of the intraflagellar transport (IFT) machinery as well as the ciliary appendage proteins CEP164 and NINEIN. Functions as a regulator of Hedgehog signaling both through its role in cilium assembly but also probably through its ability to retain GLI3 within the cytoplasm. It is involved in spermatogenesis through its role in organization of the basal body and assembly of the sperm flagellum. Also indirectly involved in heart development through its function in ciliogenesis. The protein is Cilium assembly protein DZIP1 of Homo sapiens (Human).